Consider the following 1200-residue polypeptide: SR-related and CTD-associated factor 4 (1200 aa).

The CID domain occupies 1-139; it reads MDAVNAFNQE…PLLDMAAGTS (139 aa). Lysine 49 bears the N6-acetyllysine mark. A compositionally biased stretch (polar residues) spans 140–153; the sequence is NAAPGAENVTNNEG. 3 disordered regions span residues 140–172, 299–324, and 346–566; these read NAAP…PTNS, VPAS…MQQP, and SMQH…QIKS. At serine 154 the chain carries Phosphoserine. Pro residues-rich tracts occupy residues 367–390 and 399–461; these read APPP…PGMP and LPQP…PPVQ. Residues 462-471 show a composition bias toward low complexity; sequence PTFQPTFQPQ. Positions 493–503 are enriched in basic and acidic residues; it reads EVKRHVPESRK. The span at 504–541 shows a compositional bias: basic residues; sequence SRSRSPKRRRSRSGSRSRRSRHRRSRSRSRDRRRHSPR. Basic and acidic residues predominate over residues 543-558; the sequence is RSQERRDREKERERRQ. One can recognise an RRM domain in the interval 574–648; sequence TTLWVGQLDK…KSIKIAWALN (75 aa). 3 disordered regions span residues 696–724, 834–875, and 927–1200; these read WKGI…VSPI, VSGA…SLLG, and PPHM…EAPR. Phosphoserine is present on serine 722. Composition is skewed to pro residues over residues 856-868 and 927-958; these read PAAP…PPVT and PPHM…PPHG. Residues 965 to 978 show a composition bias toward gly residues; the sequence is GMPGLGGPGPGPGG. The segment covering 986–1036 has biased composition (low complexity); it reads QQQPQQQQQQQQQQQQQQQQQQQQPPPQQSQTQQQPAPSQQPAPAQQQPQQ. Serine 1058 bears the Phosphoserine mark. Over residues 1063 to 1139 the composition is skewed to basic and acidic residues; that stretch reads VENDRERYGS…RGKEKHEVAD (77 aa). The segment covering 1153–1162 has biased composition (polar residues); it reads QVGNTDTVSE. The residue at position 1178 (serine 1178) is a Phosphoserine.

Interacts with POLR2A; via C-terminal heptapeptide repeat domain (CTD) phosphorylated at 'Ser-2' and 'Ser-5'.

The protein localises to the nucleus. Anti-terminator protein required to prevent early mRNA termination during transcription. Together with SCAF8, acts by suppressing the use of early, alternative poly(A) sites, thereby preventing the accumulation of non-functional truncated proteins. Mechanistically, associates with the phosphorylated C-terminal heptapeptide repeat domain (CTD) of the largest RNA polymerase II subunit (POLR2A), and subsequently binds nascent RNA upstream of early polyadenylation sites to prevent premature mRNA transcript cleavage and polyadenylation. Independently of SCAF8, also acts as a suppressor of transcriptional readthrough. This chain is SR-related and CTD-associated factor 4, found in Rattus norvegicus (Rat).